The chain runs to 388 residues: Probable proton-coupled zinc antiporter SLC30A3 (388 aa).

Residues 1 to 13 (MEPSPTTGGSETT) are compositionally biased toward polar residues. Disordered regions lie at residues 1–30 (MEPS…GLRL) and 35–54 (TEAP…SFHH). Topologically, residues 1-75 (MEPSPTTGGS…TPERMQAQRQ (75 aa)) are cytoplasmic. Residues 76 to 96 (LCTACAVCCVFMAGEVVGGYL) traverse the membrane as a helical segment. Residues 97–105 (AHSLAIMTD) lie on the Lumenal side of the membrane. The helical transmembrane segment at 106-126 (AAHLLADVGSMMGSLFSLWLS) threads the bilayer. The Zn(2+) site is built by histidine 108 and aspartate 112. Residues 127–145 (TRPATRTMTFGWHRSETLG) are Cytoplasmic-facing. The helical transmembrane segment at 146 to 166 (ALASVVSLWMVTGILLYLAFI) threads the bilayer. The Lumenal portion of the chain corresponds to 167-177 (RLLHSDYHIEG). Residues 178-198 (GAMLLTASIAVCANLLMAFVL) traverse the membrane as a helical segment. Residues 199-235 (HQAGPPHSHGSRGAEYAPLEEGSGEPLPLGNTSVRAA) lie on the Cytoplasmic side of the membrane. Residues 236–256 (FVHVLGDLLQSLGVLIASILI) form a helical membrane-spanning segment. The Zn(2+) site is built by histidine 238 and aspartate 242. The Lumenal segment spans residues 257-264 (YFKPQYKA). The helical transmembrane segment at 265 to 285 (ADPISTFLFSICALGSTAPTL) threads the bilayer. Residues 286-388 (RDVLRVLMEG…CLRCQEPPQA (103 aa)) are Cytoplasmic-facing.

Belongs to the cation diffusion facilitator (CDF) transporter (TC 2.A.4) family. SLC30A subfamily. In terms of assembly, homodimer. Homodimerization could regulate efficiency of zinc transport. Interacts with TMEM163.

It is found in the cytoplasmic vesicle. Its subcellular location is the secretory vesicle. It localises to the synaptic vesicle membrane. The protein localises to the synapse. The protein resides in the synaptosome. It is found in the late endosome membrane. Its subcellular location is the lysosome membrane. It catalyses the reaction Zn(2+)(in) + 2 H(+)(out) = Zn(2+)(out) + 2 H(+)(in). Its function is as follows. Probable proton-coupled zinc ion antiporter mediating the import of zinc from cytoplasm into synaptic vesicles and participating to cellular zinc ion homeostasis in the brain. The chain is Probable proton-coupled zinc antiporter SLC30A3 from Bos taurus (Bovine).